We begin with the raw amino-acid sequence, 623 residues long: MAPPAARARYIANKADNQILSKKPPKRPGLNGNNKTKEATPAGKKKDKDAKKRNQPTSGGQEKGLPNPIMPSVQTAFKTFVSARLCSAIWAYIADCDETFNYWEPLHYIINGHGLQTWEYSPQFGLRSYTYLLLQGVPGYFYQKLFNPSPILIFYMVRCMLGFGCAVMERYMYKSICQEFGIHIGRLWLIFQLFSVGMFVSSTALLPSSFSMYFGCAALAAWWQQNYCFAIFLTAISALLGWPFAALIGIPLVLEMLLRQRDWKTFVQWTLISGATVAIPMIAIDTSYFGKLTFAPLNIVWYNVFTSHGPNIFGTEPLSYYIINGFLNFNIIWLLALQLPIMLVIDYLIVPAKSKSTLNFPHYISLAPLYLWLLVFFAQPHKEERFLFPIYPLISLCGAITVDVYQRIFFRMKSVVFKIKAGVHYLDHSMFIAILVMVTSTLLGLSRVFALYRNYHAPMDLMLELNQFKATPQYDPDVIYNVCIGKDWHRYPGSFFFPAKNFRLRFLKSEFRGMLPAYYDEGQNATKVVQPYFNDLNQENEHMYFDYDRCDFLVDFDEGKYTALEPNYSKRSKDWSVMKSLPFLIPEKSHKVLRAFYVPFLTDNHIQYGDFNLLKRKTKRNGR.

8 helical membrane-spanning segments follow: residues 152–172 (LIFY…ERYM), 193–223 (LFSV…AAWW), 229–254 (FAIF…PLVL), 266–284 (FVQW…MIAI), 326–348 (FLNF…IDYL), 360–378 (FPHY…VFFA), 390–410 (IYPL…RIFF), and 431–452 (FIAI…FALY).

Belongs to the glycosyltransferase 22 family.

The protein localises to the endoplasmic reticulum membrane. The catalysed reaction is an alpha-D-Man-(1-&gt;2)-alpha-D-Man-(1-&gt;2)-alpha-D-Man-(1-&gt;3)-[alpha-D-Man-(1-&gt;3)-alpha-D-Man-(1-&gt;6)]-beta-D-Man-(1-&gt;4)-beta-D-GlcNAc-(1-&gt;4)-alpha-D-GlcNAc-diphospho-di-trans,poly-cis-dolichol + a di-trans,poly-cis-dolichyl beta-D-mannosyl phosphate = an alpha-D-Man-(1-&gt;2)-alpha-D-Man-(1-&gt;2)-alpha-D-Man-(1-&gt;3)-[alpha-D-Man-(1-&gt;2)-alpha-D-Man-(1-&gt;3)-alpha-D-Man-(1-&gt;6)]-beta-D-Man-(1-&gt;4)-beta-D-GlcNAc-(1-&gt;4)-alpha-D-GlcNAc-diphospho-di-trans,poly-cis-dolichol + a di-trans,poly-cis-dolichyl phosphate + H(+). It catalyses the reaction an alpha-D-Man-(1-&gt;2)-alpha-D-Man-(1-&gt;2)-alpha-D-Man-(1-&gt;3)-[alpha-D-Man-(1-&gt;2)-alpha-D-Man-(1-&gt;3)-[alpha-D-Man-(1-&gt;6)]-alpha-D-Man-(1-&gt;6)]-beta-D-Man-(1-&gt;4)-beta-D-GlcNAc-(1-&gt;4)-alpha-D-GlcNAc-diphospho-di-trans,poly-cis-dolichol + a di-trans,poly-cis-dolichyl beta-D-mannosyl phosphate = an alpha-D-Man-(1-&gt;2)-alpha-D-Man-(1-&gt;2)-alpha-D-Man-(1-&gt;3)-[alpha-D-Man-(1-&gt;2)-alpha-D-Man-(1-&gt;3)-[alpha-D-Man-(1-&gt;2)-alpha-D-Man-(1-&gt;6)]-alpha-D-Man-(1-&gt;6)]-beta-D-Man-(1-&gt;4)-beta-D-GlcNAc-(1-&gt;4)-alpha-D-GlcNAc-diphospho-di-trans,poly-cis-dolichol + a di-trans,poly-cis-dolichyl phosphate + H(+). Its pathway is protein modification; protein glycosylation. Functionally, probable alpha-1,2-mannosyltransferase involved in the N-glycosylation pathway. Probably involved in glycosylation of the TNF receptor grnd, regulating its ligand affinity. Required for normal epithelial growth and architecture. Suppressor of JNK-dependent intestinal stem cell proliferation. The protein is Alpha-1,2-mannosyltransferase Alg9 of Drosophila melanogaster (Fruit fly).